A 379-amino-acid polypeptide reads, in one-letter code: Cytochrome b (379 aa).

A run of 4 helical transmembrane segments spans residues 33-53 (FGSL…FLAM), 77-98 (WLIR…FIHV), 113-133 (WNIG…GYVL), and 178-198 (FFAF…VHLL). Heme b is bound by residues histidine 83 and histidine 97. Positions 182 and 196 each coordinate heme b. Histidine 201 contacts a ubiquinone. Transmembrane regions (helical) follow at residues 226-246 (TKDL…ALFF), 288-308 (LGGV…PLLN), 320-340 (VTQV…WIGG), and 347-367 (FTMI…ILIP).

Belongs to the cytochrome b family. The cytochrome bc1 complex contains 11 subunits: 3 respiratory subunits (MT-CYB, CYC1 and UQCRFS1), 2 core proteins (UQCRC1 and UQCRC2) and 6 low-molecular weight proteins (UQCRH/QCR6, UQCRB/QCR7, UQCRQ/QCR8, UQCR10/QCR9, UQCR11/QCR10 and a cleavage product of UQCRFS1). This cytochrome bc1 complex then forms a dimer. Heme b is required as a cofactor.

It localises to the mitochondrion inner membrane. Its function is as follows. Component of the ubiquinol-cytochrome c reductase complex (complex III or cytochrome b-c1 complex) that is part of the mitochondrial respiratory chain. The b-c1 complex mediates electron transfer from ubiquinol to cytochrome c. Contributes to the generation of a proton gradient across the mitochondrial membrane that is then used for ATP synthesis. The chain is Cytochrome b (MT-CYB) from Akodon lutescens puer (Altiplano grass mouse).